A 147-amino-acid chain; its full sequence is Cyanate hydratase (147 aa).

Catalysis depends on residues arginine 88, glutamate 91, and serine 114.

It belongs to the cyanase family.

It catalyses the reaction cyanate + hydrogencarbonate + 3 H(+) = NH4(+) + 2 CO2. In terms of biological role, catalyzes the reaction of cyanate with bicarbonate to produce ammonia and carbon dioxide. The protein is Cyanate hydratase of Dechloromonas aromatica (strain RCB).